We begin with the raw amino-acid sequence, 300 residues long: Ribosomal protein bS6--L-glutamate ligase (300 aa).

The ATP-grasp domain occupies Met104–Glu287. ATP is bound by residues Lys141, Glu178 to Tyr179, Asp187, and Arg211 to Asn213. Residues Asp248, Glu260, and Asn262 each contribute to the Mg(2+) site. Mn(2+) is bound by residues Asp248, Glu260, and Asn262.

The protein belongs to the RimK family. Mg(2+) serves as cofactor. Requires Mn(2+) as cofactor.

Its function is as follows. An L-glutamate ligase that catalyzes the ATP-dependent post-translational addition of glutamate residues to the C-terminus of ribosomal protein bS6 (RpsF). Is also able to catalyze the synthesis of poly-alpha-glutamate in vitro, via ATP hydrolysis from unprotected glutamate as substrate. The number of glutamate residues added to either RpsF or to poly-alpha-glutamate changes with pH. The sequence is that of Ribosomal protein bS6--L-glutamate ligase from Escherichia coli O139:H28 (strain E24377A / ETEC).